The primary structure comprises 259 residues: 4-hydroxy-tetrahydrodipicolinate reductase (259 aa).

NAD(+) contacts are provided by residues 8–13, 94–96, and 120–123; these read GFAGAM, GTT, and APNF. His150 acts as the Proton donor/acceptor in catalysis. Residue His151 participates in (S)-2,3,4,5-tetrahydrodipicolinate binding. Residue Lys154 is the Proton donor of the active site. Residue 160 to 161 participates in (S)-2,3,4,5-tetrahydrodipicolinate binding; sequence GT.

Belongs to the DapB family.

The protein localises to the cytoplasm. The enzyme catalyses (S)-2,3,4,5-tetrahydrodipicolinate + NAD(+) + H2O = (2S,4S)-4-hydroxy-2,3,4,5-tetrahydrodipicolinate + NADH + H(+). It carries out the reaction (S)-2,3,4,5-tetrahydrodipicolinate + NADP(+) + H2O = (2S,4S)-4-hydroxy-2,3,4,5-tetrahydrodipicolinate + NADPH + H(+). Its pathway is amino-acid biosynthesis; L-lysine biosynthesis via DAP pathway; (S)-tetrahydrodipicolinate from L-aspartate: step 4/4. Catalyzes the conversion of 4-hydroxy-tetrahydrodipicolinate (HTPA) to tetrahydrodipicolinate. This is 4-hydroxy-tetrahydrodipicolinate reductase from Limosilactobacillus fermentum (strain NBRC 3956 / LMG 18251) (Lactobacillus fermentum).